Consider the following 191-residue polypeptide: ATP synthase subunit b 2 (191 aa).

The span at 1–12 (MAESHGEAKGGE) shows a compositional bias: basic and acidic residues. The disordered stretch occupies residues 1-31 (MAESHGEAKGGEAKGTASAHTEAEGGHGFPP). The chain crosses the membrane as a helical span at residues 38 to 60 (PSQIASLVIAFVALYVIVSRVAL).

The protein belongs to the ATPase B chain family. In terms of assembly, F-type ATPases have 2 components, F(1) - the catalytic core - and F(0) - the membrane proton channel. F(1) has five subunits: alpha(3), beta(3), gamma(1), delta(1), epsilon(1). F(0) has three main subunits: a(1), b(2) and c(10-14). The alpha and beta chains form an alternating ring which encloses part of the gamma chain. F(1) is attached to F(0) by a central stalk formed by the gamma and epsilon chains, while a peripheral stalk is formed by the delta and b chains.

It is found in the cell inner membrane. F(1)F(0) ATP synthase produces ATP from ADP in the presence of a proton or sodium gradient. F-type ATPases consist of two structural domains, F(1) containing the extramembraneous catalytic core and F(0) containing the membrane proton channel, linked together by a central stalk and a peripheral stalk. During catalysis, ATP synthesis in the catalytic domain of F(1) is coupled via a rotary mechanism of the central stalk subunits to proton translocation. In terms of biological role, component of the F(0) channel, it forms part of the peripheral stalk, linking F(1) to F(0). The b'-subunit is a diverged and duplicated form of b found in plants and photosynthetic bacteria. The polypeptide is ATP synthase subunit b 2 (atpF2) (Bradyrhizobium sp. (strain ORS 278)).